Reading from the N-terminus, the 144-residue chain is Maximins 10/H15 (144 aa).

A signal peptide spans 1-18 (MNFKYIVAVSFLIASAYA). A propeptide spanning residues 19–43 (RSVQNDEQSLSQRDVLEEESLREIR) is cleaved from the precursor. S70 is subject to Serine amide. The propeptide occupies 74–123 (TAEDHEVMKRLEAVMRDLDSLDYPEEATERETRGFNQEEIANLFTKKEKR). Position 143 is a leucine amide (L143).

Belongs to the bombinin family. Expressed by the skin glands.

Its subcellular location is the secreted. Functionally, maximin-10 shows antimicrobial activity against bacteria and against the fungus C.albicans. It has little hemolytic activity. In terms of biological role, maximin-H15 shows antimicrobial activity against bacteria and against the fungus C.albicans. Shows strong hemolytic activity. The protein is Maximins 10/H15 of Bombina maxima (Giant fire-bellied toad).